Consider the following 162-residue polypeptide: Large ribosomal subunit protein bL17 (162 aa).

The tract at residues 126 to 162 (KKEEVKTKSRRGGKAKKAEPTTEAPANTTEETTDSAE) is disordered. The segment covering 146–155 (TTEAPANTTE) has biased composition (low complexity).

The protein belongs to the bacterial ribosomal protein bL17 family. In terms of assembly, part of the 50S ribosomal subunit. Contacts protein L32.

This Flavobacterium psychrophilum (strain ATCC 49511 / DSM 21280 / CIP 103535 / JIP02/86) protein is Large ribosomal subunit protein bL17.